A 451-amino-acid polypeptide reads, in one-letter code: E3 ubiquitin-protein ligase trul-1 (451 aa).

An RING-type; atypical zinc finger spans residues 13 to 54 (CSICFEDLKQNDKISAIVCGHIYHHGCISQWIATKRQCPSCR). Coiled coils occupy residues 96 to 130 (LKVEQEKLGTLNTENKNLKDTVKSLEKKIIREKDK) and 209 to 243 (NKDLTDKRREAAKEIEQLKMEVQSLKRAAQEDAAI). Disordered regions lie at residues 270 to 297 (RDVLETETPPPAKRKSMGFDESSQMIDP) and 389 to 442 (KIPN…SSTS). Residues 427–442 (STRISSFFSRTTSSTS) are compositionally biased toward low complexity.

Belongs to the TRAIP family.

It is found in the nucleus. It localises to the chromosome. The enzyme catalyses S-ubiquitinyl-[E2 ubiquitin-conjugating enzyme]-L-cysteine + [acceptor protein]-L-lysine = [E2 ubiquitin-conjugating enzyme]-L-cysteine + N(6)-ubiquitinyl-[acceptor protein]-L-lysine.. Its pathway is protein modification; protein ubiquitination. Its function is as follows. E3 ubiquitin ligase that acts as a key regulator of DNA repair in response to replication stress. Acts by mediating ubiquitination of the CMG helicase complex, promoting the unloading of the CMG helicase complex by the p97 ATPase (cdc-48.1 or cdc-48.2). The protein is E3 ubiquitin-protein ligase trul-1 of Caenorhabditis elegans.